The following is a 756-amino-acid chain: Probable chemoreceptor y4sI (756 aa).

Helical transmembrane passes span 26 to 46 (VCVAVLSCTTVATFAGITSVA) and 330 to 350 (LIKIIGITAATAILALAMAIL). HAMP domains follow at residues 353–406 (RSIS…ARVA) and 434–486 (DEQA…ETIR). The Methyl-accepting transducer domain occupies 491–720 (QAASMSSIVS…ESDAACRSLN (230 aa)). A disordered region spans residues 736–756 (GGGSSTRQPQSPPTQRYFMSR).

It belongs to the methyl-accepting chemotaxis (MCP) protein family.

Its subcellular location is the cell membrane. In terms of biological role, chemotactic-signal transducers respond to changes in the concentration of attractants and repellents in the environment, transduce a signal from the outside to the inside of the cell, and facilitate sensory adaptation through the variation of the level of methylation. Attractants increase the level of methylation while repellents decrease the level of methylation. The polypeptide is Probable chemoreceptor y4sI (Sinorhizobium fredii (strain NBRC 101917 / NGR234)).